Here is a 233-residue protein sequence, read N- to C-terminus: Lipoprotein-releasing system ATP-binding protein LolD (233 aa).

The region spanning 7–233 (IHCEKLSKTY…QLQSESERNH (227 aa)) is the ABC transporter domain. 43–50 (GASGAGKS) is a binding site for ATP.

Belongs to the ABC transporter superfamily. Lipoprotein translocase (TC 3.A.1.125) family. As to quaternary structure, the complex is composed of two ATP-binding proteins (LolD) and two transmembrane proteins (LolC and LolE).

It localises to the cell inner membrane. In terms of biological role, part of the ABC transporter complex LolCDE involved in the translocation of mature outer membrane-directed lipoproteins, from the inner membrane to the periplasmic chaperone, LolA. Responsible for the formation of the LolA-lipoprotein complex in an ATP-dependent manner. This Coxiella burnetii (strain RSA 493 / Nine Mile phase I) protein is Lipoprotein-releasing system ATP-binding protein LolD.